A 401-amino-acid chain; its full sequence is Imidazolonepropionase (401 aa).

Fe(3+) is bound by residues His-70 and His-72. The Zn(2+) site is built by His-70 and His-72. The 4-imidazolone-5-propanoate site is built by Arg-79, Tyr-142, and His-175. Tyr-142 contributes to the N-formimidoyl-L-glutamate binding site. Position 238 (His-238) interacts with Fe(3+). Zn(2+) is bound at residue His-238. Gln-241 is a 4-imidazolone-5-propanoate binding site. Asp-313 contributes to the Fe(3+) binding site. Zn(2+) is bound at residue Asp-313. N-formimidoyl-L-glutamate-binding residues include Asn-315 and Gly-317. Thr-318 contacts 4-imidazolone-5-propanoate.

It belongs to the metallo-dependent hydrolases superfamily. HutI family. Zn(2+) serves as cofactor. The cofactor is Fe(3+).

The protein resides in the cytoplasm. It carries out the reaction 4-imidazolone-5-propanoate + H2O = N-formimidoyl-L-glutamate. It participates in amino-acid degradation; L-histidine degradation into L-glutamate; N-formimidoyl-L-glutamate from L-histidine: step 3/3. Its function is as follows. Catalyzes the hydrolytic cleavage of the carbon-nitrogen bond in imidazolone-5-propanoate to yield N-formimidoyl-L-glutamate. It is the third step in the universal histidine degradation pathway. This chain is Imidazolonepropionase, found in Xanthomonas campestris pv. campestris (strain 8004).